A 362-amino-acid polypeptide reads, in one-letter code: MKASILIKLETLVERYEEVQHLLGDPDVLGNQDKFRALSKEYSQLEEVTGCFKSYQQAQEDLEAAEEMANEDDAEMREMAQEEIKDAKANIERLTDELQILLIPKDPNDERNCFLEIRAGAGGDEAGIFAGNLFRMYSKFAEKKGWRVEVMSSNVSEQGGFKEMIAKISGDAVYGTMKFESGGHRVQRVPETESQGRVHTSACTVAVMPEIPEADLPEIKAGDLKIDTFRASGAGGQHVNTTDSAIRITHLPTGTVVECQDERSQHKNKAKAMAVLAARIVQAEEERRAAAISDTRRNLLGSGDRSDRIRTYNYPQGRVSDHRINLTIYRLNEVLEGDMQSLLDPVLQEHQADQLAALAEHN.

Glutamine 237 is modified (N5-methylglutamine).

The protein belongs to the prokaryotic/mitochondrial release factor family. Post-translationally, methylated by PrmC. Methylation increases the termination efficiency of RF1.

It localises to the cytoplasm. Peptide chain release factor 1 directs the termination of translation in response to the peptide chain termination codons UAG and UAA. This Vibrio atlanticus (strain LGP32) (Vibrio splendidus (strain Mel32)) protein is Peptide chain release factor 1.